Consider the following 500-residue polypeptide: Guanosine-5'-triphosphate,3'-diphosphate pyrophosphatase (500 aa).

This sequence belongs to the GppA/Ppx family. GppA subfamily.

It carries out the reaction guanosine 3'-diphosphate 5'-triphosphate + H2O = guanosine 3',5'-bis(diphosphate) + phosphate + H(+). Its pathway is purine metabolism; ppGpp biosynthesis; ppGpp from GTP: step 2/2. Its function is as follows. Catalyzes the conversion of pppGpp to ppGpp. Guanosine pentaphosphate (pppGpp) is a cytoplasmic signaling molecule which together with ppGpp controls the 'stringent response', an adaptive process that allows bacteria to respond to amino acid starvation, resulting in the coordinated regulation of numerous cellular activities. The sequence is that of Guanosine-5'-triphosphate,3'-diphosphate pyrophosphatase from Photorhabdus laumondii subsp. laumondii (strain DSM 15139 / CIP 105565 / TT01) (Photorhabdus luminescens subsp. laumondii).